A 930-amino-acid chain; its full sequence is MKLKDTLNLGKTAFPMRAGLPTKEPVWQKEWEDAKLYQRRQELNEGKPHFVLHDGPPYANGNIHVGHAMNHISKDIIIRSKSMSGFNAPYIPGWDTHGLPIEQVLAKQGVKRKEMDLVEYLKLCREYALSQVYKQRDDFKRLGMSGDWENLYVTLTPDYEAAQIRVFGEMANKGYIYRGAKPVYWSWSSESALAEAEIEYHDLVSTSLYYANKVKDGKGILDTDTYIVVWTTTPFTITASRGLTVGADIDYVLVQPASETRKFVVAAELLTSLSEKFGWADVQVLATYRGQELNHIVTEHPWDTAVDELVILGDHVTTDSGTGIVHTAPGFGEDDYNVGIANGLEVAVTVDERGIMMANAGPEFEGQFYDKVVPTVIEKLGNLLLAQEEISHSYPFDWRTKKPIIWRAVPQWFASVSKFRQEILDAIDKVKFHTEWGKVRLYNMIRDRGDWVISRQRAWGVPLPIFYAEDGTAIMTAETIEHVAQLFEVHGSSIWWERDAKNLLPEGFTHPGSPNGEFKKETDIMDVWFDSGSSWNGVLVNRPNLTYPADLYLEGSDQYRGWFNSSLITSVANHGVAPYKQILSQGFTLDGKGEKMSKSLGNTIAPSDVEKQFGAEILRLWVTSVDSSNDVRISMDILSQVSETYRKIRNTLRFLIANTSDFNPAQDVVAYDELRSVDKYMTIRFNQLVKTIRDAYADFEFLTIYKALVNFINVDLSAFYLDFAKDVVYIEGAKSLERRQMQTVFYDILVKITKLLTPILPHTAEEIWSYLEFEAEDFVQLSELPEAQTFANQEEVLDTWAAFMDFRGQAQKALEEARNAKVIGKSLEAHLTVYPNEVVKTLLEAVNSNVAQLLIVSDLTIAEGPAPEAAVSFEDVAFTVERAAGQVCDRCRRIDPTTAERSYQAVICDHCASIVEENFAEAVAEGFEEK.

The 'HIGH' region signature appears at 57 to 67 (PYANGNIHVGH). Position 554 (glutamate 554) interacts with L-isoleucyl-5'-AMP. Positions 595 to 599 (KMSKS) match the 'KMSKS' region motif. Lysine 598 is an ATP binding site. Cysteine 888, cysteine 891, cysteine 908, and cysteine 911 together coordinate Zn(2+).

It belongs to the class-I aminoacyl-tRNA synthetase family. IleS type 1 subfamily. In terms of assembly, monomer. The cofactor is Zn(2+).

It is found in the cytoplasm. It catalyses the reaction tRNA(Ile) + L-isoleucine + ATP = L-isoleucyl-tRNA(Ile) + AMP + diphosphate. Its function is as follows. Catalyzes the attachment of isoleucine to tRNA(Ile). As IleRS can inadvertently accommodate and process structurally similar amino acids such as valine, to avoid such errors it has two additional distinct tRNA(Ile)-dependent editing activities. One activity is designated as 'pretransfer' editing and involves the hydrolysis of activated Val-AMP. The other activity is designated 'posttransfer' editing and involves deacylation of mischarged Val-tRNA(Ile). This chain is Isoleucine--tRNA ligase, found in Streptococcus pneumoniae (strain P1031).